The sequence spans 78 residues: UPF0349 protein SSP1836 (78 aa).

This sequence belongs to the UPF0349 family.

The chain is UPF0349 protein SSP1836 from Staphylococcus saprophyticus subsp. saprophyticus (strain ATCC 15305 / DSM 20229 / NCIMB 8711 / NCTC 7292 / S-41).